A 130-amino-acid polypeptide reads, in one-letter code: Small ribosomal subunit protein uS11c (130 aa).

The protein belongs to the universal ribosomal protein uS11 family. As to quaternary structure, part of the 30S ribosomal subunit.

The protein localises to the plastid. The chain is Small ribosomal subunit protein uS11c from Aneura mirabilis (Parasitic liverwort).